The primary structure comprises 593 residues: Solute carrier family 40 member 3, chloroplastic (593 aa).

Residues 1–23 (MSMSKLLSPPPTSPPGPALSRLP) form a disordered region. Residues 1–51 (MSMSKLLSPPPTSPPGPALSRLPCRRVAPPPVLPFPFPLRRLTSRRVFATS) constitute a chloroplast transit peptide. The span at 8 to 17 (SPPPTSPPGP) shows a compositional bias: pro residues. A run of 11 helical transmembrane segments spans residues 181 to 201 (ILPVAVLGFFTKLVVFAAGPL), 219 to 239 (AAIQTAAHLVSVATITYAFAV), 253 to 273 (FAVLVASTAVDRLACVALGII), 303 to 322 (LLCETVGASIFALLLSKNNP), 323 to 343 (LTCIKLSCVISLCALPLLIFL), 403 to 423 (YVFVCFNVALAPGALMTTFLI), 431 to 451 (VIGAFGGSSGAVGILATFATA), 462 to 482 (AGAAGLIAQSALLGAAVVVYL), 493 to 513 (LFAFLGLIVASRAGHMAYSAI), 530 to 550 (IGATEIAVASLAELAMMAVAV), and 557 to 577 (HFGALAALSATAVTAAAGMYC).

Belongs to the ferroportin (FP) (TC 2.A.100) family. SLC40A subfamily.

Its subcellular location is the membrane. The protein resides in the plastid. The protein localises to the chloroplast envelope. In terms of biological role, may be involved in iron transport and iron homeostasis. The polypeptide is Solute carrier family 40 member 3, chloroplastic (Oryza sativa subsp. japonica (Rice)).